A 154-amino-acid chain; its full sequence is Myoglobin (154 aa).

Residues 1–147 (MADVKKNCLA…FNDECQHQLA (147 aa)) enclose the Globin domain. Residue His-96 participates in heme b binding.

The protein belongs to the globin family.

It localises to the cytoplasm. The sequence is that of Myoglobin (GLBB) from Nippostrongylus brasiliensis (Rat hookworm).